Reading from the N-terminus, the 157-residue chain is MGGWMSCAPPIYTPHTNSWTESGWDRTSWWRWSAQRWSGWSFKIVRANKALRVMAKTKMPLVLIPPSPNKPYSKLAINQELHLTPHKKTSPATSSSLKPRPGPRGYLNARLSWRCPTLSRKVRVPTIKVPMVRAPSTKPSKTSSSNNPWPLTPRMRG.

2 disordered regions span residues 76-105 (AINQELHLTPHKKTSPATSSSLKPRPGPRG) and 132-157 (VRAPSTKPSKTSSSNNPWPLTPRMRG). Residues 135–148 (PSTKPSKTSSSNNP) show a composition bias toward low complexity.

The protein to M.pneumoniae MPN_091 and MPN_413.

This is an uncharacterized protein from Mycoplasma pneumoniae (strain ATCC 29342 / M129 / Subtype 1) (Mycoplasmoides pneumoniae).